We begin with the raw amino-acid sequence, 705 residues long: Polyribonucleotide nucleotidyltransferase (705 aa).

Residues Asp-486 and Asp-492 each contribute to the Mg(2+) site. Residues 553-612 (PRIIKFKINPEKIRDVIGKGGAVIRALTEETGTTIDISDDGSVTIASISNEGGEQAKRRI) form the KH domain. An S1 motif domain is found at 622–690 (GKIYEGTVLK…DKGRLRLSMK (69 aa)).

Belongs to the polyribonucleotide nucleotidyltransferase family. Mg(2+) is required as a cofactor.

The protein localises to the cytoplasm. The catalysed reaction is RNA(n+1) + phosphate = RNA(n) + a ribonucleoside 5'-diphosphate. In terms of biological role, involved in mRNA degradation. Catalyzes the phosphorolysis of single-stranded polyribonucleotides processively in the 3'- to 5'-direction. The polypeptide is Polyribonucleotide nucleotidyltransferase (Nitrosomonas eutropha (strain DSM 101675 / C91 / Nm57)).